The primary structure comprises 175 residues: Co-chaperone protein HscB homolog (175 aa).

In terms of domain architecture, J spans D8 to L80.

The protein belongs to the HscB family. Interacts with HscA and stimulates its ATPase activity.

Its function is as follows. Co-chaperone involved in the maturation of iron-sulfur cluster-containing proteins. Seems to help targeting proteins to be folded toward HscA. This Chromobacterium violaceum (strain ATCC 12472 / DSM 30191 / JCM 1249 / CCUG 213 / NBRC 12614 / NCIMB 9131 / NCTC 9757 / MK) protein is Co-chaperone protein HscB homolog.